Reading from the N-terminus, the 192-residue chain is dCTP deaminase, dUMP-forming (192 aa).

Residues 101–106, aspartate 119, 127–129, glutamine 148, tyrosine 162, and glutamine 174 each bind dCTP; these read KSSLGR and TLE. Catalysis depends on glutamate 129, which acts as the Proton donor/acceptor. The tract at residues 165 to 184 is disordered; sequence GAYGNRYQGQRGPTASRSHL. A compositionally biased stretch (polar residues) spans 171-183; that stretch reads YQGQRGPTASRSH.

It belongs to the dCTP deaminase family. Homotrimer.

It carries out the reaction dCTP + 2 H2O = dUMP + NH4(+) + diphosphate. Its pathway is pyrimidine metabolism; dUMP biosynthesis; dUMP from dCTP: step 1/1. Its function is as follows. Bifunctional enzyme that catalyzes both the deamination of dCTP to dUTP and the hydrolysis of dUTP to dUMP without releasing the toxic dUTP intermediate. The polypeptide is dCTP deaminase, dUMP-forming (Kocuria rhizophila (strain ATCC 9341 / DSM 348 / NBRC 103217 / DC2201)).